We begin with the raw amino-acid sequence, 412 residues long: Eukaryotic initiation factor 4A-2 (412 aa).

A2 carries the post-translational modification N-acetylalanine. The short motif at E39–Q67 is the Q motif element. The region spanning I70–I240 is the Helicase ATP-binding domain. A83–T90 lines the ATP pocket. Phosphothreonine is present on T145. A DEAD box motif is present at residues D188–D191. The Helicase C-terminal domain maps to G251–L412.

The protein belongs to the DEAD box helicase family. eIF4A subfamily. As to quaternary structure, eIF4F is a multi-subunit complex, the composition of which varies with external and internal environmental conditions. It is composed of at least EIF4A, EIF4E and EIF4G. As to expression, ubiquitous. Preferentially expressed in flowers, young leaves and roots.

The protein localises to the cytoplasm. It carries out the reaction ATP + H2O = ADP + phosphate + H(+). ATP-dependent RNA helicase which is a subunit of the eIF4F complex involved in cap recognition and is required for mRNA binding to ribosome. In the current model of translation initiation, eIF4A unwinds RNA secondary structures in the 5'-UTR of mRNAs which is necessary to allow efficient binding of the small ribosomal subunit, and subsequent scanning for the initiator codon. This Arabidopsis thaliana (Mouse-ear cress) protein is Eukaryotic initiation factor 4A-2 (TIF4A-2).